Reading from the N-terminus, the 166-residue chain is Ribosome maturation factor RimM (166 aa).

The region spanning 91–165 (DDEFYHADLI…RIVADPPEGL (75 aa)) is the PRC barrel domain.

The protein belongs to the RimM family. As to quaternary structure, binds ribosomal protein uS19.

It is found in the cytoplasm. Its function is as follows. An accessory protein needed during the final step in the assembly of 30S ribosomal subunit, possibly for assembly of the head region. Essential for efficient processing of 16S rRNA. May be needed both before and after RbfA during the maturation of 16S rRNA. It has affinity for free ribosomal 30S subunits but not for 70S ribosomes. The chain is Ribosome maturation factor RimM from Dinoroseobacter shibae (strain DSM 16493 / NCIMB 14021 / DFL 12).